The chain runs to 278 residues: S-formylglutathione hydrolase YeiG (278 aa).

Residues S145, D223, and H256 each act as charge relay system in the active site.

This sequence belongs to the esterase D family.

It carries out the reaction S-formylglutathione + H2O = formate + glutathione + H(+). In terms of biological role, serine hydrolase involved in the detoxification of formaldehyde. Hydrolyzes S-formylglutathione to glutathione and formate. This Shigella dysenteriae serotype 1 (strain Sd197) protein is S-formylglutathione hydrolase YeiG (yeiG).